The sequence spans 71 residues: UPF0346 protein SPT_1257 (71 aa).

Belongs to the UPF0346 family.

This chain is UPF0346 protein SPT_1257, found in Streptococcus pneumoniae (strain Taiwan19F-14).